The chain runs to 239 residues: Tetraspanin-9 (239 aa).

The Cytoplasmic segment spans residues 1–13 (MARGCLCCLKYTM). Residues 14 to 34 (FLFNLIFWLCGCGLLGVGIWL) form a helical membrane-spanning segment. The Extracellular portion of the chain corresponds to 35–55 (SVSQGNFATFSPSFPSLSAAN). A helical transmembrane segment spans residues 56–76 (LVIAIGTIVMVTGFLGCLGAI). Residues 77-85 (KENKCLLLS) lie on the Cytoplasmic side of the membrane. A helical transmembrane segment spans residues 86-106 (FFIVLLIILLAELILIILFFV). Residues 107 to 203 (YMDKVNENAK…VKLWFDDNKH (97 aa)) lie on the Extracellular side of the membrane. N-linked (GlcNAc...) asparagine glycosylation occurs at Asn-180. The chain crosses the membrane as a helical span at residues 204–224 (VLGTVGMCILIMQILGMAFSM). The Cytoplasmic segment spans residues 225–239 (TLFQHIHRTGKKYDA).

It belongs to the tetraspanin (TM4SF) family. As to quaternary structure, found in a complex with GP6. In terms of processing, glycosylated. Strongly expressed in megakaryocytes, platelets and lung. Weakly expressed in bone marrow, brain and kidney (at protein level).

The protein localises to the membrane. The protein is Tetraspanin-9 (Tspan9) of Mus musculus (Mouse).